The sequence spans 234 residues: ATP-dependent dethiobiotin synthetase BioD (234 aa).

An ATP-binding site is contributed by 12-17; sequence GAGKTI. Mg(2+) is bound at residue Thr-16. Residue Lys-39 is part of the active site. Thr-43 provides a ligand contact to substrate. ATP is bound by residues Asp-47, 108 to 111, 168 to 169, and 200 to 202; these read EGLG, SC, and PYL. Mg(2+)-binding residues include Asp-47 and Glu-108.

The protein belongs to the dethiobiotin synthetase family. In terms of assembly, homodimer. Mg(2+) serves as cofactor.

It localises to the cytoplasm. The enzyme catalyses (7R,8S)-7,8-diammoniononanoate + CO2 + ATP = (4R,5S)-dethiobiotin + ADP + phosphate + 3 H(+). The catalysed reaction is (7R,8S)-8-amino-7-(carboxyamino)nonanoate + ATP = (4R,5S)-dethiobiotin + ADP + phosphate + H(+). It functions in the pathway cofactor biosynthesis; biotin biosynthesis; biotin from 7,8-diaminononanoate: step 1/2. In terms of biological role, catalyzes a mechanistically unusual reaction, the ATP-dependent insertion of CO2 between the N7 and N8 nitrogen atoms of 7,8-diaminopelargonic acid (DAPA, also called 7,8-diammoniononanoate) to form a ureido ring. This cyanobacterium does not encode bioA (which catalyzes the formation of the precursor for this reaction in the cannonical pathway), instead it encodes bioU, which replaces bioA and also performs the first half of the cannonical BioD reaction. Thus in this organism BioD has a different substrate. This chain is ATP-dependent dethiobiotin synthetase BioD, found in Rippkaea orientalis (strain PCC 8801 / RF-1) (Cyanothece sp. (strain PCC 8801)).